The chain runs to 373 residues: LIM domain-binding protein 1 (373 aa).

Disordered regions lie at residues 248 to 297 (PPAE…LSSQ) and 329 to 373 (DAAN…QASQ). The segment covering 266–282 (SGGSTMSSGGGNTNNSN) has biased composition (low complexity). The segment covering 288 to 297 (PASTFALSSQ) has biased composition (polar residues). Positions 298 to 337 (DVMVVGEPTLMGGEFGDEDERLITRLENTQFDAANGIDDE) constitute an LIM interaction domain (LID) domain.

This sequence belongs to the LDB family. As to quaternary structure, forms homodimers and heterodimers. Interacts with and activates lhx1/lim1. The stoichiometry of lhx1/lim1 and ldb1 is important for their function and an excess of ldb1 can inhibit lhx1/lim1 function. When bound to lhx1/lim1, escapes degradation by rnf12. Interacts with the N-terminal region of rnf12. In terms of processing, undergoes rnf12-mediated ubiquitin-proteasome-dependent degradation.

Its subcellular location is the nucleus. Functionally, binds to the LIM domain of a wide variety of LIM domain-containing transcription factors. Acts as a coactivator together with otx2 to stimulate lhx1/lim1-mediated activation of the gsc promoter in the Spemann organizer. Acts synergistically with lhx1/lim1 and ssbp in axis formation. This Xenopus tropicalis (Western clawed frog) protein is LIM domain-binding protein 1.